The chain runs to 350 residues: Probable lactoylglutathione lyase, chloroplastic (350 aa).

A chloroplast-targeting transit peptide spans 1–61 (MVRIIPMAAS…KLLRRSVNCL (61 aa)). VOC domains follow at residues 88 to 212 (RMLH…LLER) and 218 to 342 (PLCQ…FVDN). His-91 lines the Zn(2+) pocket. Residue Arg-95 participates in substrate binding. Position 142 (Glu-142) interacts with Zn(2+). Substrate contacts are provided by Asn-146 and His-160. 2 residues coordinate Zn(2+): His-160 and Glu-208. Glu-208 serves as the catalytic Proton donor/acceptor.

The protein belongs to the glyoxalase I family. Requires Zn(2+) as cofactor.

It is found in the plastid. It localises to the chloroplast stroma. It catalyses the reaction (R)-S-lactoylglutathione = methylglyoxal + glutathione. It functions in the pathway secondary metabolite metabolism; methylglyoxal degradation; (R)-lactate from methylglyoxal: step 1/2. Its function is as follows. Catalyzes the conversion of hemimercaptal, formed from methylglyoxal and glutathione, to S-lactoylglutathione. The chain is Probable lactoylglutathione lyase, chloroplastic from Arabidopsis thaliana (Mouse-ear cress).